The sequence spans 427 residues: Glutamate-1-semialdehyde 2,1-aminomutase (427 aa).

Lys265 is subject to N6-(pyridoxal phosphate)lysine.

This sequence belongs to the class-III pyridoxal-phosphate-dependent aminotransferase family. HemL subfamily. In terms of assembly, homodimer. Pyridoxal 5'-phosphate is required as a cofactor.

The protein resides in the cytoplasm. It carries out the reaction (S)-4-amino-5-oxopentanoate = 5-aminolevulinate. The protein operates within porphyrin-containing compound metabolism; protoporphyrin-IX biosynthesis; 5-aminolevulinate from L-glutamyl-tRNA(Glu): step 2/2. The chain is Glutamate-1-semialdehyde 2,1-aminomutase from Burkholderia ambifaria (strain ATCC BAA-244 / DSM 16087 / CCUG 44356 / LMG 19182 / AMMD) (Burkholderia cepacia (strain AMMD)).